A 123-amino-acid polypeptide reads, in one-letter code: Alpha-lactalbumin (123 aa).

Residues 1-123 form the C-type lysozyme domain; that stretch reads KQFTKCELSQ…KLEQWLCEKE (123 aa). 4 cysteine pairs are disulfide-bonded: cysteine 6-cysteine 120, cysteine 28-cysteine 111, cysteine 61-cysteine 77, and cysteine 73-cysteine 91. Asparagine 45 is a glycosylation site (N-linked (GlcNAc...) asparagine). Positions 79, 82, 84, 87, and 88 each coordinate Ca(2+).

This sequence belongs to the glycosyl hydrolase 22 family. Lactose synthase (LS) is a heterodimer of a catalytic component, beta1,4-galactosyltransferase (beta4Gal-T1) and a regulatory component, alpha-lactalbumin (LA). As to expression, mammary gland specific. Secreted in milk.

It localises to the secreted. Its function is as follows. Regulatory subunit of lactose synthase, changes the substrate specificity of galactosyltransferase in the mammary gland making glucose a good acceptor substrate for this enzyme. This enables LS to synthesize lactose, the major carbohydrate component of milk. In other tissues, galactosyltransferase transfers galactose onto the N-acetylglucosamine of the oligosaccharide chains in glycoproteins. In Papio cynocephalus (Yellow baboon), this protein is Alpha-lactalbumin (LALBA).